Consider the following 310-residue polypeptide: 2-dehydro-3-deoxygluconokinase (310 aa).

Residues 29-33 (GDTLN), Tyr-89, 103-105 (YWR), and Arg-171 contribute to the substrate site. ATP is bound by residues 169-171 (NYR), 229-234 (KRGADA), and 262-265 (AAGD). Position 265 (Asp-265) interacts with substrate. Residue Asp-265 is the Proton acceptor of the active site.

It belongs to the carbohydrate kinase PfkB family.

The enzyme catalyses 2-dehydro-3-deoxy-D-gluconate + ATP = 2-dehydro-3-deoxy-6-phospho-D-gluconate + ADP + H(+). Its pathway is carbohydrate acid metabolism; 2-dehydro-3-deoxy-D-gluconate degradation; D-glyceraldehyde 3-phosphate and pyruvate from 2-dehydro-3-deoxy-D-gluconate: step 1/2. Catalyzes the phosphorylation of 2-keto-3-deoxygluconate (KDG) to produce 2-keto-3-deoxy-6-phosphogluconate (KDPG). The chain is 2-dehydro-3-deoxygluconokinase from Dickeya dadantii (strain 3937) (Erwinia chrysanthemi (strain 3937)).